The chain runs to 283 residues: Protein/nucleic acid deglycase HchA (283 aa).

Positions 86, 91, and 123 each coordinate Zn(2+). Cys-185 functions as the Nucleophile in the catalytic mechanism.

This sequence belongs to the peptidase C56 family. HchA subfamily. In terms of assembly, homodimer.

It is found in the cytoplasm. The catalysed reaction is N(omega)-(1-hydroxy-2-oxopropyl)-L-arginyl-[protein] + H2O = lactate + L-arginyl-[protein] + H(+). It carries out the reaction N(6)-(1-hydroxy-2-oxopropyl)-L-lysyl-[protein] + H2O = lactate + L-lysyl-[protein] + H(+). The enzyme catalyses S-(1-hydroxy-2-oxopropyl)-L-cysteinyl-[protein] + H2O = lactate + L-cysteinyl-[protein] + H(+). It catalyses the reaction N(omega)-(1-hydroxy-2-oxoethyl)-L-arginyl-[protein] + H2O = L-arginyl-[protein] + glycolate + H(+). The catalysed reaction is N(6)-(1-hydroxy-2-oxoethyl)-L-lysyl-[protein] + H2O = glycolate + L-lysyl-[protein] + H(+). It carries out the reaction S-(1-hydroxy-2-oxoethyl)-L-cysteinyl-[protein] + H2O = glycolate + L-cysteinyl-[protein] + H(+). The enzyme catalyses N(2)-(1-hydroxy-2-oxopropyl)-dGTP + H2O = lactate + dGTP + H(+). It catalyses the reaction N(2)-(1-hydroxy-2-oxopropyl)-GTP + H2O = lactate + GTP + H(+). The catalysed reaction is N(2)-(1-hydroxy-2-oxopropyl)-GDP + H2O = lactate + GDP + H(+). It carries out the reaction N(2)-(1-hydroxy-2-oxopropyl)-GMP + H2O = lactate + GMP + H(+). The enzyme catalyses N(2)-(1-hydroxy-2-oxoethyl)-dGTP + H2O = dGTP + glycolate + H(+). It catalyses the reaction N(2)-(1-hydroxy-2-oxoethyl)-GTP + H2O = glycolate + GTP + H(+). The catalysed reaction is N(2)-(1-hydroxy-2-oxoethyl)-GDP + H2O = glycolate + GDP + H(+). It carries out the reaction N(2)-(1-hydroxy-2-oxoethyl)-GMP + H2O = glycolate + GMP + H(+). The enzyme catalyses an N(2)-(1-hydroxy-2-oxopropyl)-guanosine in RNA + H2O = a guanosine in RNA + lactate + H(+). It catalyses the reaction an N(2)-(1-hydroxy-2-oxopropyl)-2'-deoxyguanosine in DNA + H2O = a 2'-deoxyguanosine in DNA + lactate + H(+). The catalysed reaction is an N(2)-(1-hydroxy-2-oxoethyl)-guanosine in RNA + H2O = a guanosine in RNA + glycolate + H(+). It carries out the reaction an N(2)-(1-hydroxy-2-oxoethyl)-2'-deoxyguanosine in DNA + H2O = a 2'-deoxyguanosine in DNA + glycolate + H(+). Functionally, protein and nucleotide deglycase that catalyzes the deglycation of the Maillard adducts formed between amino groups of proteins or nucleotides and reactive carbonyl groups of glyoxals. Thus, functions as a protein deglycase that repairs methylglyoxal- and glyoxal-glycated proteins, and releases repaired proteins and lactate or glycolate, respectively. Deglycates cysteine, arginine and lysine residues in proteins, and thus reactivates these proteins by reversing glycation by glyoxals. Acts on early glycation intermediates (hemithioacetals and aminocarbinols), preventing the formation of Schiff bases and advanced glycation endproducts (AGE). Also functions as a nucleotide deglycase able to repair glycated guanine in the free nucleotide pool (GTP, GDP, GMP, dGTP) and in DNA and RNA. Is thus involved in a major nucleotide repair system named guanine glycation repair (GG repair), dedicated to reversing methylglyoxal and glyoxal damage via nucleotide sanitization and direct nucleic acid repair. Plays an important role in protecting cells from carbonyl stress. This Shigella flexneri protein is Protein/nucleic acid deglycase HchA.